Here is a 128-residue protein sequence, read N- to C-terminus: Probable 4-amino-4-deoxy-L-arabinose-phosphoundecaprenol flippase subunit ArnF (128 aa).

At 1 to 2 the chain is on the cytoplasmic side; sequence MG. Residues 3-23 traverse the membrane as a helical segment; sequence LMWGLFSVIIASAAQLSLGFA. Over 24-35 the chain is Periplasmic; the sequence is ASHLPPMTHLWD. A helical transmembrane segment spans residues 36 to 56; that stretch reads FIAALLAFGLDARILLLGLLG. The Cytoplasmic portion of the chain corresponds to 57-76; that stretch reads YLLSVFCWYKTLHKLALSKA. Residues 77–97 form a helical membrane-spanning segment; the sequence is YALLSMSYVLVWIASMILPGW. The Periplasmic segment spans residues 98–100; it reads EGT. Residues 101–121 traverse the membrane as a helical segment; the sequence is FSLKALLGVACIMSGLMLIFL. Residues 122–128 are Cytoplasmic-facing; the sequence is PTTKQRY.

Belongs to the ArnF family. Heterodimer of ArnE and ArnF.

The protein resides in the cell inner membrane. It participates in bacterial outer membrane biogenesis; lipopolysaccharide biosynthesis. Functionally, translocates 4-amino-4-deoxy-L-arabinose-phosphoundecaprenol (alpha-L-Ara4N-phosphoundecaprenol) from the cytoplasmic to the periplasmic side of the inner membrane. This Escherichia coli O17:K52:H18 (strain UMN026 / ExPEC) protein is Probable 4-amino-4-deoxy-L-arabinose-phosphoundecaprenol flippase subunit ArnF.